The sequence spans 105 residues: Pyrimidine/purine nucleoside phosphorylase (105 aa).

This sequence belongs to the nucleoside phosphorylase PpnP family.

It catalyses the reaction a purine D-ribonucleoside + phosphate = a purine nucleobase + alpha-D-ribose 1-phosphate. The enzyme catalyses adenosine + phosphate = alpha-D-ribose 1-phosphate + adenine. The catalysed reaction is cytidine + phosphate = cytosine + alpha-D-ribose 1-phosphate. It carries out the reaction guanosine + phosphate = alpha-D-ribose 1-phosphate + guanine. It catalyses the reaction inosine + phosphate = alpha-D-ribose 1-phosphate + hypoxanthine. The enzyme catalyses thymidine + phosphate = 2-deoxy-alpha-D-ribose 1-phosphate + thymine. The catalysed reaction is uridine + phosphate = alpha-D-ribose 1-phosphate + uracil. It carries out the reaction xanthosine + phosphate = alpha-D-ribose 1-phosphate + xanthine. Catalyzes the phosphorolysis of diverse nucleosides, yielding D-ribose 1-phosphate and the respective free bases. Can use uridine, adenosine, guanosine, cytidine, thymidine, inosine and xanthosine as substrates. Also catalyzes the reverse reactions. The chain is Pyrimidine/purine nucleoside phosphorylase from Cupriavidus taiwanensis (strain DSM 17343 / BCRC 17206 / CCUG 44338 / CIP 107171 / LMG 19424 / R1) (Ralstonia taiwanensis (strain LMG 19424)).